We begin with the raw amino-acid sequence, 960 residues long: Dynamin-like GTPase OPA1, mitochondrial (960 aa).

The N-terminal 87 residues, 1–87 (MWRLRRAAVA…IKYGYQPRRN (87 aa)), are a transit peptide targeting the mitochondrion. Topologically, residues 88 to 96 (FWPARLATR) are mitochondrial matrix. Residues 97–113 (LLKLRYLILGSAVGGGY) form a helical membrane-spanning segment. The Mitochondrial intermembrane portion of the chain corresponds to 114 to 770 (TAKKTFDQWK…NAIENMVGPD (657 aa)). Short sequence motifs (LQQQIQ motif) lie at residues 181-186 (DFFTSG) and 217-222 (QLQEEL). The stretch at 210-254 (SDKEKIDQLQEELLHTQLKYQRILERLEKENKELRKLVLQKDDKG) forms a coiled coil. Lys228 bears the N6-acetyllysine mark. The short motif at 235–240 (RLEKEN) is the LQQQIQ motif element. Positions 285 to 561 (QDHLPRVVVV…FWKMVRESVE (277 aa)) constitute a Dynamin-type G domain. The segment at 295 to 302 (GDQSAGKT) is G1 motif. Residues Ser298, Gly300, Lys301, Thr302, Ser303, and Gly317 each contribute to the GTP site. Thr302 lines the Mg(2+) pocket. Residues 321–324 (MMTR) are G2 motif. Thr323 and Asp398 together coordinate Mg(2+). Positions 398-401 (DLPG) are G3 motif. The segment at 467–470 (TKVD) is G4 motif. Residues Lys468, Asp470, Thr503, Gly506, and Asn507 each coordinate GTP. The G5 motif stretch occupies residues 501 to 504 (VVTG). 2 stalk region regions span residues 589–836 (DRNE…IKDT) and 874–928 (CNDV…IKLL). The segment at 736 to 856 (SDKQQWDAAI…KTALNHCNLC (121 aa)) is paddle region. An intramembrane segment occupies 771-781 (WKKRWLYWKNR). The Mitochondrial intermembrane portion of the chain corresponds to 782-960 (TQEQCVHNET…AFIEALHQEK (179 aa)). A disulfide bond links Cys856 and Cys874. Residues 895-960 (RQQLTNTEVR…AFIEALHQEK (66 aa)) adopt a coiled-coil conformation.

Belongs to the TRAFAC class dynamin-like GTPase superfamily. Dynamin/Fzo/YdjA family. In terms of assembly, oligomeric complex consisting of membrane-bound and soluble forms of OPA1. Interacts with RCC1L; RCC1L acts as a guanine nucleotide exchange factor (GEF) for OPA1 by exchanging bound GDP for free GTP. Interacts with CHCHD3 and IMMT; these interactions occur preferentially with soluble OPA1 forms. Interacts with PRELID1. Cleaved by OMA1 or YME1L downstream of the transmembrane region in response to different signals to generate soluble forms. Cleaved by OMA1 at position S1 following stress conditions, generating the short soluble form (Dynamin-like GTPase OPA1, short form; S-OPA1). AFG3L2 is involved in the regulation of OMA1-dependent processing of OPA1. PARL-dependent proteolytic processing releases an antiapoptotic soluble form not required for mitochondrial fusion. In terms of processing, cleavage at position S2 by YME1L is required to mediate oxidative phosphorylation (OXPHOS)-induced mitochondrial fusion. Cleavage occurs in the sequence motif Leu-Gln-Gln-Gln-Ile-Gln (LQQQIQ). Post-translationally, cleavage at position S2 by YME1L is required to mediate oxidative phosphorylation (OXPHOS)-induced mitochondrial fusion. Cleavage occurs in the sequence motif Leu-Gln-Gln-Gln-Ile-Gln (LQQQIQ). Cleavage at position S3 by YME1L is required for membrane tubulation. Cleavage at position S3 by YME1L is required for membrane tubulation. As to expression, highly expressed in retina. Also expressed in brain, testis, heart and skeletal muscle. Low levels of all isoforms expressed in a variety of tissues. Expressed in retina, skeletal muscle, heart, lung, ovary, colon, thyroid gland, leukocytes and fetal brain. Low levels of all isoforms expressed in a variety of tissues. In terms of tissue distribution, isoform 2 expressed in colon, liver, kidney, thyroid gland and leukocytes.

The protein localises to the mitochondrion inner membrane. The protein resides in the mitochondrion intermembrane space. The catalysed reaction is GTP + H2O = GDP + phosphate + H(+). Activated by guanine nucleotide exchange factor RCC1L. Its function is as follows. Dynamin-related GTPase that is essential for normal mitochondrial morphology by mediating fusion of the mitochondrial inner membranes, regulating cristae morphology and maintaining respiratory chain function. Exists in two forms: the transmembrane, long form (Dynamin-like GTPase OPA1, long form; L-OPA1), which is tethered to the inner mitochondrial membrane, and the short soluble form (Dynamin-like GTPase OPA1, short form; S-OPA1), which results from proteolytic cleavage and localizes in the intermembrane space. Both forms (L-OPA1 and S-OPA1) cooperate to catalyze the fusion of the mitochondrial inner membrane. The equilibrium between L-OPA1 and S-OPA1 is essential: excess levels of S-OPA1, produced by cleavage by OMA1 following loss of mitochondrial membrane potential, lead to an impaired equilibrium between L-OPA1 and S-OPA1, inhibiting mitochondrial fusion. The balance between L-OPA1 and S-OPA1 also influences cristae shape and morphology. Involved in remodeling cristae and the release of cytochrome c during apoptosis. Proteolytic processing by PARL in response to intrinsic apoptotic signals may lead to disassembly of OPA1 oligomers and release of the caspase activator cytochrome C (CYCS) into the mitochondrial intermembrane space. Acts as a regulator of T-helper Th17 cells, which are characterized by cells with fused mitochondria with tight cristae, by mediating mitochondrial membrane remodeling: OPA1 is required for interleukin-17 (IL-17) production. Its role in mitochondrial morphology is required for mitochondrial genome maintenance. In terms of biological role, constitutes the transmembrane long form (L-OPA1) that plays a central role in mitochondrial inner membrane fusion and cristae morphology. L-OPA1 and the soluble short form (S-OPA1) form higher-order helical assemblies that coordinate the fusion of mitochondrial inner membranes. Inner membrane-anchored L-OPA1 molecules initiate membrane remodeling by recruiting soluble S-OPA1 to rapidly polymerize into a flexible cylindrical scaffold encaging the mitochondrial inner membrane. Once at the membrane surface, the formation of S-OPA1 helices induce bilayer curvature. OPA1 dimerization through the paddle region, which inserts into cardiolipin-containing membrane, promotes GTP hydrolysis and the helical assembly of a flexible OPA1 lattice on the membrane, which drives membrane curvature and mitochondrial fusion. Plays a role in the maintenance and remodeling of mitochondrial cristae, some invaginations of the mitochondrial inner membrane that provide an increase in the surface area. Probably acts by forming helical filaments at the inside of inner membrane tubes with the shape and dimensions of crista junctions. The equilibrium between L-OPA1 and S-OPA1 influences cristae shape and morphology: increased L-OPA1 levels promote cristae stacking and elongated mitochondria, while increased S-OPA1 levels correlated with irregular cristae packing and round mitochondria shape. Constitutes the soluble short form (S-OPA1) generated by cleavage by OMA1, which plays a central role in mitochondrial inner membrane fusion and cristae morphology. The transmembrane long form (L-OPA1) and the S-OPA1 form higher-order helical assemblies that coordinate the fusion of mitochondrial inner membranes. Inner membrane-anchored L-OPA1 molecules initiate membrane remodeling by recruiting soluble S-OPA1 to rapidly polymerize into a flexible cylindrical scaffold encaging the mitochondrial inner membrane. Once at the membrane surface, the formation of S-OPA1 helices induce bilayer curvature. OPA1 dimerization through the paddle region, which inserts into cardiolipin-containing membrane, promotes GTP hydrolysis and the helical assembly of a flexible OPA1 lattice on the membrane, which drives membrane curvature and mitochondrial fusion. Excess levels of S-OPA1 produced by cleavage by OMA1 following stress conditions that induce loss of mitochondrial membrane potential, lead to an impaired equilibrium between L-OPA1 and S-OPA1, thereby inhibiting mitochondrial fusion. Involved in mitochondrial safeguard in response to transient mitochondrial membrane depolarization by mediating flickering: cleavage by OMA1 leads to excess production of S-OPA1, preventing mitochondrial hyperfusion. Plays a role in the maintenance and remodeling of mitochondrial cristae, some invaginations of the mitochondrial inner membrane that provide an increase in the surface area. Probably acts by forming helical filaments at the inside of inner membrane tubes with the shape and dimensions of crista junctions. The equilibrium between L-OPA1 and S-OPA1 influences cristae shape and morphology: increased L-OPA1 levels promote cristae stacking and elongated mitochondria, while increased S-OPA1 levels correlated with irregular cristae packing and round mitochondria shape. Functionally, coexpression of isoform 1 with shorter alternative products is required for optimal activity in promoting mitochondrial fusion. Its function is as follows. Isoforms that contain the alternative exon 4b are required for mitochondrial genome maintenance, possibly by anchoring the mitochondrial nucleoids to the inner mitochondrial membrane. In Homo sapiens (Human), this protein is Dynamin-like GTPase OPA1, mitochondrial.